The following is a 212-amino-acid chain: FMN-dependent NADH:quinone oxidoreductase (212 aa).

FMN contacts are provided by residues S10 and 17 to 19 (SFS).

This sequence belongs to the azoreductase type 1 family. In terms of assembly, homodimer. It depends on FMN as a cofactor.

It catalyses the reaction 2 a quinone + NADH + H(+) = 2 a 1,4-benzosemiquinone + NAD(+). It carries out the reaction N,N-dimethyl-1,4-phenylenediamine + anthranilate + 2 NAD(+) = 2-(4-dimethylaminophenyl)diazenylbenzoate + 2 NADH + 2 H(+). In terms of biological role, quinone reductase that provides resistance to thiol-specific stress caused by electrophilic quinones. Its function is as follows. Also exhibits azoreductase activity. Catalyzes the reductive cleavage of the azo bond in aromatic azo compounds to the corresponding amines. In Malacoplasma penetrans (strain HF-2) (Mycoplasma penetrans), this protein is FMN-dependent NADH:quinone oxidoreductase.